Reading from the N-terminus, the 362-residue chain is NAD(P)H-quinone oxidoreductase subunit 1, chloroplastic (362 aa).

The next 8 helical transmembrane spans lie at 31-51 (WVPLPILSLVIVATLGVLVIV), 99-119 (WLFTLGPAVVVIPIFLAYLVV), 132-152 (IGIFFWIAISSIAPIGLLMSG), 178-198 (LAICVLSVCLLADSLSTVDIV), 206-226 (ILTWNIWRQPIGFVAFLIAAL), 268-288 (LVSGCFVTVLYLGGWHGPFAI), 303-323 (AFLGITWTLLKTFLFLFAAIL), and 336-356 (LLDLGWKFLLPVSLGNLLLTA).

This sequence belongs to the complex I subunit 1 family. As to quaternary structure, NDH is composed of at least 16 different subunits, 5 of which are encoded in the nucleus.

It is found in the plastid. The protein localises to the chloroplast thylakoid membrane. It carries out the reaction a plastoquinone + NADH + (n+1) H(+)(in) = a plastoquinol + NAD(+) + n H(+)(out). The enzyme catalyses a plastoquinone + NADPH + (n+1) H(+)(in) = a plastoquinol + NADP(+) + n H(+)(out). Its function is as follows. NDH shuttles electrons from NAD(P)H:plastoquinone, via FMN and iron-sulfur (Fe-S) centers, to quinones in the photosynthetic chain and possibly in a chloroplast respiratory chain. The immediate electron acceptor for the enzyme in this species is believed to be plastoquinone. Couples the redox reaction to proton translocation, and thus conserves the redox energy in a proton gradient. This Nephroselmis olivacea (Green alga) protein is NAD(P)H-quinone oxidoreductase subunit 1, chloroplastic.